Consider the following 695-residue polypeptide: Phenoloxidase subunit 2 (695 aa).

Residues His-215, His-219, and His-245 each contribute to the Cu cation site. Glu-353 acts as the Proton acceptor in catalysis. Cu cation contacts are provided by His-368, His-372, and His-408. 2 disulfides stabilise this stretch: Cys-586–Cys-630 and Cys-588–Cys-637.

Heterodimer. Forms a complex with an interleukin 1-like protein as a consequence of a host defense response. Cu(2+) is required as a cofactor. The N-terminus is blocked. In terms of tissue distribution, synthesized by oenocytoids, a type of hemocyte, and released into the hemolymph plasma.

The protein resides in the secreted. It carries out the reaction 2 L-dopa + O2 = 2 L-dopaquinone + 2 H2O. It catalyses the reaction L-tyrosine + O2 = L-dopaquinone + H2O. Its activity is regulated as follows. Activated by immulectin and lipopolysaccharide. Its function is as follows. This is a copper-containing oxidase that functions in the formation of pigments such as melanins and other polyphenolic compounds. Catalyzes the rate-limiting conversions of tyrosine to DOPA, DOPA to DOPA-quinone and possibly 5,6 dihydroxyindole to indole-5'6 quinone. Binds to the surface of hemocytes and is involved in hemocyte melanization. The sequence is that of Phenoloxidase subunit 2 from Manduca sexta (Tobacco hawkmoth).